We begin with the raw amino-acid sequence, 1320 residues long: MELDWRSTLSNQERSKYITELAQILADISQINGGARANFDLEKLKKTAEQFETSLYASSSSKELYLDAMRKRIAAMDAAKKKTLANQKQKAAAQRKGFGLAPTLNPQMFLNQQAQARQQARPMRGSVGGGQSPVMMMPQHGVPAHVAHGVPPGVAVSQAKRAQLSLQQQQQINEMKVAEIPRELLQRIPNIPPGVTTWQQVTELAQQKRLTQSDLQIAKQVYQMHQQMMVKSKMQQASLNQLTPQQRAQLQQRQQSTQQSQSAPPQAPQVAQSQQVPAQKPQQQQQQQQQQQQQQQQQQQQQQQQQQQQQQQQQQQQQQQQQQQQQQQQQQQQQQQQQQQQQQQQQQQQQQQQQQHAAAQAQLQHPNAYQQKNMMAQQSAAALQQGQQQPRQMGPQQAREVPNVLNKLNQVFSPAEQKALYENGKKLVQDLQLAGKLPASLTQQQQILYIKKYINQMVLKKLQQNIRLAQQIGAANSANTQSQMAAQAGARFTPGMAQHSQFAQQQHTGNQAQVQSQVSQSISQQQAQLTQKVQQAQQSQLQQTQEQDPQHTQLADSFSQRQFTSPTLAKPSANVSTIAQQQTQPTALSQSHPQQQQGSQAQQQLLQQQQGSQAQQQLLQQQQQQPPPPPPQPQQQTQQPQQPQQQQQPQPQPQLQQQQQLGLQPHQPQLAQAQAQQPQPQQQTQQQTQQQQQQQQQQQQQQTQQQTQHQPQPQLKPQSQQPQPVPQQVQSQQPQQVQSQQQPQPQQLSQPAQQQSQQQQQQQQQSQQQKLRQVQLPQQTPKITLPRPTEQDMMILKRINSEVAKSPLRLSNITNQLTPEQKQMIKNKLQANQQLLSNVDNFIPTLYLITRNEENVRQLLQIRMLAKEIMEHASKGVFIVPPDVVDKVIFRYQKYYEFIKEQLLRRHQQLFSTRQQQMQQQVVQQQQAGQIKLGQNAVGAPQNPQVTTNTDIAMQQQRVQGSFQQMQQQIRQQQVKQAQLQQAQQQAQQQQQAQQLQQGHMPVQQSMPLAGVQTVMATQAATLPQHASPVSSNTANIPKTGDAPVSIDSVTPVPPGIVNSSGPSPVAGKQILAATMVPQHKLSPTKSDFAQAPTADNPYQVDELRLKNLAIRKAEIMSRFKHRQEIFEHSPVDLFLCTLADCMGIKDGSYELLAPIPALMVEQINGTGKKKFTKAQQRVREQDSIECYVKDNKLMMSSKFSADERSYSIHDRDISSCFLDLYGLSDCTSLSFDSSSAEPPTEQVNKKRSHDSLEISPAESDSSLLNDSKKLKVDSPDDLFMTSNMMLDNKNAQPPIGLGLGVGLGEAGSSIWNWNYWESL.

The segment covering 235–244 (QQASLNQLTP) has biased composition (polar residues). 5 disordered regions span residues 235–283 (QQAS…KPQQ), 372–398 (KNMM…PQQA), 540–688 (QLQQ…QQQT), 702–791 (QTQQ…PTEQ), and 1233–1270 (DSSS…DSKK). Low complexity-rich tracts occupy residues 245 to 283 (QQRA…KPQQ), 375 to 398 (MAQQ…PQQA), and 540 to 554 (QLQQ…HTQL). Over residues 555-587 (ADSFSQRQFTSPTLAKPSANVSTIAQQQTQPTA) the composition is skewed to polar residues. Composition is skewed to low complexity over residues 588–624 (LSQS…QQQQ), 634–688 (QQQT…QQQT), and 702–780 (QTQQ…PQQT).

This sequence belongs to the Mediator complex subunit 15 family. As to quaternary structure, component of the Mediator complex.

It is found in the nucleus. Component of the Mediator complex, a coactivator involved in regulated gene transcription of nearly all RNA polymerase II-dependent genes. Mediator functions as a bridge to convey information from gene-specific regulatory proteins to the basal RNA polymerase II transcription machinery. Mediator is recruited to promoters by direct interactions with regulatory proteins and serves as a scaffold for the assembly of a functional preinitiation complex with RNA polymerase II and the general transcription factors. The chain is Mediator of RNA polymerase II transcription subunit 15 (GAL11) from Eremothecium gossypii (strain ATCC 10895 / CBS 109.51 / FGSC 9923 / NRRL Y-1056) (Yeast).